The primary structure comprises 341 residues: Fe-S cluster assembly protein DRE2 (341 aa).

Residues 1–157 are N-terminal SAM-like domain; that stretch reads MNTLLLLHPT…FKKLSSPPTL (157 aa). The tract at residues 151-171 is disordered; it reads LSSPPTLTDSSEADEDEESQL. The interval 157–204 is linker; the sequence is LTDSSEADEDEESQLNEKLKGSKLIYFDESSDDEIIDEDELLRDDDGA. Residues 161–170 show a composition bias toward acidic residues; that stretch reads SEADEDEESQ. Residues cysteine 215, cysteine 227, cysteine 230, and cysteine 232 each contribute to the [2Fe-2S] cluster site. Residues 215–232 form a fe-S binding site A region; the sequence is CALPNGKRRKKACKDCTC. [4Fe-4S] cluster-binding residues include cysteine 304, cysteine 307, cysteine 315, and cysteine 318. Short sequence motifs (cx2C motif) lie at residues 304–307 and 315–318; these read CGSC and CDGC. The interval 304-318 is fe-S binding site B; it reads CGSCALGDAFRCDGC.

This sequence belongs to the anamorsin family. As to quaternary structure, monomer. Interacts with TAH18. Interacts with MIA40. It depends on [2Fe-2S] cluster as a cofactor. Requires [4Fe-4S] cluster as cofactor.

It localises to the cytoplasm. It is found in the mitochondrion intermembrane space. Its function is as follows. Component of the cytosolic iron-sulfur (Fe-S) protein assembly (CIA) machinery required for the maturation of extramitochondrial Fe-S proteins. Part of an electron transfer chain functioning in an early step of cytosolic Fe-S biogenesis, facilitating the de novo assembly of a [4Fe-4S] cluster on the scaffold complex CFD1-NBP35. Electrons are transferred to DRE2 from NADPH via the FAD- and FMN-containing protein TAH18. TAH18-DRE2 are also required for the assembly of the diferric tyrosyl radical cofactor of ribonucleotide reductase (RNR), probably by providing electrons for reduction during radical cofactor maturation in the catalytic small subunit RNR2. In Komagataella phaffii (strain GS115 / ATCC 20864) (Yeast), this protein is Fe-S cluster assembly protein DRE2.